The chain runs to 262 residues: Adenosylcobinamide-GDP ribazoletransferase (262 aa).

4 helical membrane passes run 43–63 (PLAG…LGAI), 121–141 (VALI…LPLL), 145–165 (GGGV…VWHW), and 195–215 (GVIL…AVLL).

This sequence belongs to the CobS family. Mg(2+) is required as a cofactor.

The protein localises to the cell inner membrane. The catalysed reaction is alpha-ribazole + adenosylcob(III)inamide-GDP = adenosylcob(III)alamin + GMP + H(+). It carries out the reaction alpha-ribazole 5'-phosphate + adenosylcob(III)inamide-GDP = adenosylcob(III)alamin 5'-phosphate + GMP + H(+). It participates in cofactor biosynthesis; adenosylcobalamin biosynthesis; adenosylcobalamin from cob(II)yrinate a,c-diamide: step 7/7. Functionally, joins adenosylcobinamide-GDP and alpha-ribazole to generate adenosylcobalamin (Ado-cobalamin). Also synthesizes adenosylcobalamin 5'-phosphate from adenosylcobinamide-GDP and alpha-ribazole 5'-phosphate. The chain is Adenosylcobinamide-GDP ribazoletransferase from Sinorhizobium medicae (strain WSM419) (Ensifer medicae).